A 672-amino-acid chain; its full sequence is Fumonisin cluster-specific transcription factor FUM21 (672 aa).

A DNA-binding region (zn(2)-C6 fungal-type) is located at residues 30-56 (CESCKRRKVRCNGTNPCNQCQKSSIEC). Disordered regions lie at residues 65–111 (ANDG…RFDG) and 190–212 (KSSGPSYGMSEPPSRDSDPGFNT). Positions 77-93 (SPVQHTRGSLTPPQTSP) are enriched in polar residues.

The protein resides in the nucleus. Its function is as follows. Transcription factor that regulates the expression of the gene cluster that mediates the biosynthesis of fumonisins B1 (FB1), B2 (FB2), B3 (FB3), and B4 (FB4), which are carcinogenic mycotoxins. The chain is Fumonisin cluster-specific transcription factor FUM21 (FUM21) from Gibberella moniliformis (strain M3125 / FGSC 7600) (Maize ear and stalk rot fungus).